Reading from the N-terminus, the 260-residue chain is Putative sgc region transcriptional regulator (260 aa).

One can recognise an HTH deoR-type domain in the interval 5-61; sequence RPDRIKQMLHYLWQHRHLSTQQAMELFGYAEATVRRDFQYIVNQYPGMIRGHGCLDF. Positions 22–41 form a DNA-binding region, H-T-H motif; that stretch reads LSTQQAMELFGYAEATVRRD.

In terms of biological role, putative transcriptional regulator for the sgcREAQCX region. The chain is Putative sgc region transcriptional regulator (sgcR) from Escherichia coli (strain K12).